A 297-amino-acid polypeptide reads, in one-letter code: 32 kDa beta-galactoside-binding lectin lec-3 (297 aa).

2 consecutive Galectin domains span residues 11-142 and 151-290; these read YRSK…VQWG and ESGI…IQVV. 224 to 230 is an a beta-D-galactoside binding site; sequence WGNEERE.

In terms of biological role, binds galactose. The chain is 32 kDa beta-galactoside-binding lectin lec-3 (lec-3) from Caenorhabditis elegans.